Here is a 168-residue protein sequence, read N- to C-terminus: Shikimate kinase (168 aa).

10-15 provides a ligand contact to ATP; that stretch reads GVGKTT. Position 14 (Thr-14) interacts with Mg(2+). Substrate contacts are provided by Asp-32, Arg-56, and Gly-77. Arg-115 serves as a coordination point for ATP. Residue Arg-133 participates in substrate binding.

It belongs to the shikimate kinase family. Monomer. The cofactor is Mg(2+).

It localises to the cytoplasm. It carries out the reaction shikimate + ATP = 3-phosphoshikimate + ADP + H(+). The protein operates within metabolic intermediate biosynthesis; chorismate biosynthesis; chorismate from D-erythrose 4-phosphate and phosphoenolpyruvate: step 5/7. In terms of biological role, catalyzes the specific phosphorylation of the 3-hydroxyl group of shikimic acid using ATP as a cosubstrate. This Macrococcus caseolyticus (strain JCSC5402) (Macrococcoides caseolyticum) protein is Shikimate kinase.